Here is a 143-residue protein sequence, read N- to C-terminus: Myosin 1 light chain cam2 (143 aa).

EF-hand domains are found at residues 6-41 (EQTD…LGIN), 75-110 (ESEE…LGEK), and 111-143 (LSDN…IMAK).

The protein belongs to the calmodulin family. Interacts with myo1 and pik1.

The protein resides in the cytoplasm. The protein localises to the prospore membrane. Functionally, plays a role in meiosis and sporulation. The chain is Myosin 1 light chain cam2 from Schizosaccharomyces pombe (strain 972 / ATCC 24843) (Fission yeast).